We begin with the raw amino-acid sequence, 327 residues long: MQQLEEVVASALAKIAEATDNNALEALRVEYFGKKGVFTEQMKALAGLSPEERPAAGQLINQAKEKAQNALNERREALTTAELAKKLAAETIDVSLPGRRFENGGIHPVTRTIERIERIFGELGFSAEYGPEIEDDFHNFDALNIPGHHPARTDHDTFYFNPTLMLRTHTSGVQIRTMEKQQPPIRIIAPGRVYRNDYDQTHTPMFHQVEGLLVDENISFSNLKGILHDFLLNFFEEDLQIRFRPSYFPFTEPSAEVDVMGKNGRWLEVLGCGMVHPNVLRSVGIDPEKYSGFAFGMGVERLTMLRYGVNDLRAFFENDLRFLKQFK.

Glu-252 provides a ligand contact to Mg(2+).

Belongs to the class-II aminoacyl-tRNA synthetase family. Phe-tRNA synthetase alpha subunit type 1 subfamily. Tetramer of two alpha and two beta subunits. The cofactor is Mg(2+).

It is found in the cytoplasm. It catalyses the reaction tRNA(Phe) + L-phenylalanine + ATP = L-phenylalanyl-tRNA(Phe) + AMP + diphosphate + H(+). In Tolumonas auensis (strain DSM 9187 / NBRC 110442 / TA 4), this protein is Phenylalanine--tRNA ligase alpha subunit.